We begin with the raw amino-acid sequence, 231 residues long: 5'-methylthioadenosine/S-adenosylhomocysteine nucleosidase (231 aa).

E12 functions as the Proton acceptor in the catalytic mechanism. Substrate-binding positions include G78, V153, and 174–175 (ME). The active-site Proton donor is D198.

The protein belongs to the PNP/UDP phosphorylase family. MtnN subfamily.

The enzyme catalyses S-adenosyl-L-homocysteine + H2O = S-(5-deoxy-D-ribos-5-yl)-L-homocysteine + adenine. The catalysed reaction is S-methyl-5'-thioadenosine + H2O = 5-(methylsulfanyl)-D-ribose + adenine. It carries out the reaction 5'-deoxyadenosine + H2O = 5-deoxy-D-ribose + adenine. It functions in the pathway amino-acid biosynthesis; L-methionine biosynthesis via salvage pathway; S-methyl-5-thio-alpha-D-ribose 1-phosphate from S-methyl-5'-thioadenosine (hydrolase route): step 1/2. Its function is as follows. Catalyzes the irreversible cleavage of the glycosidic bond in both 5'-methylthioadenosine (MTA) and S-adenosylhomocysteine (SAH/AdoHcy) to adenine and the corresponding thioribose, 5'-methylthioribose and S-ribosylhomocysteine, respectively. Also cleaves 5'-deoxyadenosine, a toxic by-product of radical S-adenosylmethionine (SAM) enzymes, into 5-deoxyribose and adenine. The polypeptide is 5'-methylthioadenosine/S-adenosylhomocysteine nucleosidase (Aliivibrio fischeri (Vibrio fischeri)).